The chain runs to 218 residues: PKHD-type hydroxylase Sala_1910 (218 aa).

A Fe2OG dioxygenase domain is found at 74-172 (RIAPPLLTRY…RLVAITFIQS (99 aa)). Fe cation-binding residues include histidine 92, aspartate 94, and histidine 153. Arginine 163 is a binding site for 2-oxoglutarate.

The cofactor is Fe(2+). Requires L-ascorbate as cofactor.

This is PKHD-type hydroxylase Sala_1910 from Sphingopyxis alaskensis (strain DSM 13593 / LMG 18877 / RB2256) (Sphingomonas alaskensis).